The primary structure comprises 139 residues: Large ribosomal subunit protein uL22 (139 aa).

The disordered stretch occupies residues 1–21 (MTAPEQTYRNKKQRKQQHKLR). The segment covering 9-21 (RNKKQRKQQHKLR) has biased composition (basic residues).

It belongs to the universal ribosomal protein uL22 family. As to quaternary structure, part of the 50S ribosomal subunit.

This protein binds specifically to 23S rRNA; its binding is stimulated by other ribosomal proteins, e.g. L4, L17, and L20. It is important during the early stages of 50S assembly. It makes multiple contacts with different domains of the 23S rRNA in the assembled 50S subunit and ribosome. Its function is as follows. The globular domain of the protein is located near the polypeptide exit tunnel on the outside of the subunit, while an extended beta-hairpin is found that lines the wall of the exit tunnel in the center of the 70S ribosome. The polypeptide is Large ribosomal subunit protein uL22 (Deinococcus geothermalis (strain DSM 11300 / CIP 105573 / AG-3a)).